We begin with the raw amino-acid sequence, 760 residues long: MKITCTDLVYVFILLFLNTSCVQAVFSDDAFITDWQLANLGPWEKVIPDSRDRNRVLILSNPTETSCLVSSFNVSSGQILFRNVLPFTIDEIQLDSNDHNAMVCVNSSSNHWQKYDLHDWFLLEEGVDNAPSTTILPQSSYLNDQVSIKNNELHILDEQSKLAEWKLELPQGFNKVEYFHREDPLALVLNVNDTQYMGFSANGTELIPVWQRDEWLTNVVDYAVLDVFDSRDVELNKDMKAELDSNSLWNAYWLRLTTNWNRLINLLKENQFSPGRVFTKLLALDAKDTTVSDLKFGFAKILIVLTHDGFIGGLDMVNKGQLIWKLDLEIDQGVKMFWTDKNHDELVVFSHDGHYLTIEVTKDQPIIKSRSPLSERKTVDSVIRLNEHDHQYLIKFEDKDHLLFKLNPGKNTDVPIVANNHSSSHIFVTEHDTNGIYGYIIENDTVKQTWKKAVNSKEKMVAYSKRETTNLNTLGITLGDKSVLYKYLYPNLAAYLIANEEHHTITFNLIDTITGEILITQEHKDSPDFRFPMDIVFGEYWVVYSYFSSEPVPEQKLVVVELYESLTPDERLSNSSDNFSYDPLTGHINKPQFQTKQFIFPEIIKTMSISKTTDDITTKAIVMELENGQITYIPKLLLNARGKPAEEMAKDKKKEFMATPYTPVIPINDNFIITHFRNLLPGSDSQLISIPTNLESTSIICDLGLDVFCTRITPSGQFDLMSPTFEKGKLLITIFVLLVITYFIRPSVSNKKLKSQWLIK.

The N-terminal stretch at 1–24 is a signal peptide; that stretch reads MKITCTDLVYVFILLFLNTSCVQA. Topologically, residues 25–723 are lumenal; that stretch reads VFSDDAFITD…PSGQFDLMSP (699 aa). N-linked (GlcNAc...) asparagine glycans are attached at residues asparagine 73, asparagine 106, asparagine 192, asparagine 202, asparagine 420, asparagine 443, asparagine 574, and asparagine 578. The chain crosses the membrane as a helical span at residues 724–744; sequence TFEKGKLLITIFVLLVITYFI. Over 745-760 the chain is Cytoplasmic; sequence RPSVSNKKLKSQWLIK.

The protein belongs to the EMC1 family. Component of the ER membrane protein complex (EMC), which is composed of EMC1, EMC2, EMC3, EMC4, EMC5 and EMC6. Post-translationally, N-glycosylated.

The protein resides in the endoplasmic reticulum membrane. Its function is as follows. Part of the endoplasmic reticulum membrane protein complex (EMC) that enables the energy-independent insertion into endoplasmic reticulum membranes of newly synthesized membrane proteins. Preferentially accommodates proteins with transmembrane domains that are weakly hydrophobic or contain destabilizing features such as charged and aromatic residues. Involved in the cotranslational insertion of multi-pass membrane proteins in which stop-transfer membrane-anchor sequences become ER membrane spanning helices. It is also required for the post-translational insertion of tail-anchored/TA proteins in endoplasmic reticulum membranes. By mediating the proper cotranslational insertion of N-terminal transmembrane domains in an N-exo topology, with translocated N-terminus in the lumen of the ER, controls the topology of multi-pass membrane proteins. The polypeptide is ER membrane protein complex subunit 1 (EMC1) (Saccharomyces cerevisiae (strain ATCC 204508 / S288c) (Baker's yeast)).